Consider the following 172-residue polypeptide: Centrin-1 (172 aa).

Residues 1–30 (MASSYRKPTVASTSQKRKVGPKPELTEEQK) form a disordered region. EF-hand domains are found at residues 28–63 (EQKQ…LGFE), 64–99 (PRKE…KMAE), 101–136 (DTKE…LGEN), and 137–172 (LTDE…TNLY). Residues Asp41, Asp43, Ser45, Thr47, and Glu52 each coordinate Ca(2+). 5 residues coordinate Ca(2+): Asp150, Asp152, Asp154, Glu156, and Glu161.

It belongs to the centrin family. In terms of assembly, monomer. Interacts with CIMAP3. Interacts with USP49.

Its subcellular location is the cytoplasm. The protein resides in the cytoskeleton. The protein localises to the microtubule organizing center. It localises to the centrosome. Plays a fundamental role in microtubule-organizing center structure and function. Plays a role in sperm cilia formation. This chain is Centrin-1 (CETN1), found in Bos taurus (Bovine).